Reading from the N-terminus, the 98-residue chain is Small ribosomal subunit protein bS18c (98 aa).

A compositionally biased stretch (basic and acidic residues) spans 1 to 13 (MSKQSFDFKRYKP). Residues 1–26 (MSKQSFDFKRYKPEAPSGSRKRPLKK) form a disordered region.

Belongs to the bacterial ribosomal protein bS18 family. In terms of assembly, part of the 30S ribosomal subunit.

The protein localises to the plastid. Its subcellular location is the chloroplast. The polypeptide is Small ribosomal subunit protein bS18c (Gnetum parvifolium (Small-leaved jointfir)).